We begin with the raw amino-acid sequence, 428 residues long: Histone deacetylase 3 (428 aa).

The tract at residues 3-316 (KTVAYFYDPD…WTYETSLLVD (314 aa)) is histone deacetylase. Residues His-17, Gly-21, and Lys-25 each coordinate 1D-myo-inositol 1,4,5,6-tetrakisphosphate. The active site involves His-135. Residues Asp-170, His-172, and Asp-259 each contribute to the Zn(2+) site. 1D-myo-inositol 1,4,5,6-tetrakisphosphate is bound at residue Arg-265. Basic and acidic residues-rich tracts occupy residues 386–405 (SYER…DNYS) and 415–428 (DGDH…DVEI). The interval 386 to 428 (SYERTDEPDPEERGSEDNYSRPEASNEFYDGDHDNDKESDVEI) is disordered.

It belongs to the histone deacetylase family. HD type 1 subfamily.

Its subcellular location is the nucleus. It is found in the chromosome. It localises to the cytoplasm. The protein resides in the cytosol. The enzyme catalyses N(6)-acetyl-L-lysyl-[histone] + H2O = L-lysyl-[histone] + acetate. The catalysed reaction is N(6)-acetyl-L-lysyl-[protein] + H2O = L-lysyl-[protein] + acetate. It carries out the reaction N(6)-(2E)-butenoyl-L-lysyl-[protein] + H2O = (2E)-2-butenoate + L-lysyl-[protein]. It catalyses the reaction N(6)-(2-hydroxyisobutanoyl)-L-lysyl-[protein] + H2O = 2-hydroxy-2-methylpropanoate + L-lysyl-[protein]. The enzyme catalyses N(6)-[(S)-lactoyl]-L-lysyl-[protein] + H2O = (S)-lactate + L-lysyl-[protein]. Inositol tetraphosphate (1D-myo-inositol 1,4,5,6-tetrakisphosphate) promotes the histone deacetylase activity by acting as an intermolecular glue between hdac3 and N-Cor repressor complex components. Its function is as follows. Histone deacetylase that catalyzes the deacetylation of lysine residues on the N-terminal part of the core histones (H2A, H2B, H3 and H4), and some other non-histone substrates. Histone deacetylation gives a tag for epigenetic repression and plays an important role in transcriptional regulation, cell cycle progression and developmental events. Histone deacetylases act via the formation of large multiprotein complexes, such as N-Cor repressor complex, which activate the histone deacetylase activity. Participates in the BCL6 transcriptional repressor activity by deacetylating the H3 'Lys-27' (H3K27) on enhancer elements, antagonizing EP300 acetyltransferase activity and repressing proximal gene expression. Also functions as a deacetylase for non-histone targets. In addition to protein deacetylase activity, also acts as a protein-lysine deacylase by recognizing other acyl groups: catalyzes removal of (2E)-butenoyl (crotonyl), lactoyl (lactyl) and 2-hydroxyisobutanoyl (2-hydroxyisobutyryl) acyl groups from lysine residues, leading to protein decrotonylation, delactylation and de-2-hydroxyisobutyrylation, respectively. The protein is Histone deacetylase 3 (hdac3) of Xenopus tropicalis (Western clawed frog).